The chain runs to 477 residues: Bifunctional protein HldE (477 aa).

The segment at 1–318 is ribokinase; sequence MKVNLPAFER…ENAVRGRADT (318 aa). Residue 195 to 198 participates in ATP binding; the sequence is NLSE. Residue D264 is part of the active site. The tract at residues 344–477 is cytidylyltransferase; that stretch reads MTNGVFDILH…IKKIQTESEK (134 aa).

This sequence in the N-terminal section; belongs to the carbohydrate kinase PfkB family. In the C-terminal section; belongs to the cytidylyltransferase family. In terms of assembly, homodimer.

The enzyme catalyses D-glycero-beta-D-manno-heptose 7-phosphate + ATP = D-glycero-beta-D-manno-heptose 1,7-bisphosphate + ADP + H(+). It carries out the reaction D-glycero-beta-D-manno-heptose 1-phosphate + ATP + H(+) = ADP-D-glycero-beta-D-manno-heptose + diphosphate. The protein operates within nucleotide-sugar biosynthesis; ADP-L-glycero-beta-D-manno-heptose biosynthesis; ADP-L-glycero-beta-D-manno-heptose from D-glycero-beta-D-manno-heptose 7-phosphate: step 1/4. It functions in the pathway nucleotide-sugar biosynthesis; ADP-L-glycero-beta-D-manno-heptose biosynthesis; ADP-L-glycero-beta-D-manno-heptose from D-glycero-beta-D-manno-heptose 7-phosphate: step 3/4. Catalyzes the phosphorylation of D-glycero-D-manno-heptose 7-phosphate at the C-1 position to selectively form D-glycero-beta-D-manno-heptose-1,7-bisphosphate. Its function is as follows. Catalyzes the ADP transfer from ATP to D-glycero-beta-D-manno-heptose 1-phosphate, yielding ADP-D-glycero-beta-D-manno-heptose. The protein is Bifunctional protein HldE of Salmonella paratyphi A (strain ATCC 9150 / SARB42).